The following is a 144-amino-acid chain: EF-hand calcium-binding domain-containing protein 8 (144 aa).

2 consecutive EF-hand domains span residues 52–86 (IHLA…VLSS) and 87–122 (VSDE…EFQG).

The polypeptide is EF-hand calcium-binding domain-containing protein 8 (EFCAB8) (Homo sapiens (Human)).